Reading from the N-terminus, the 436-residue chain is MLSPFEQFLRRATAGGIVLIAATILTLILSNSTWHTAYHAFWEQHLSLRWGNWIFDQSLHHWINDGLMAVFFFVVGLELKREFLVGELSSLRDAALPVIAALGGMLAPALIYHQFNPTGPAADGWGIPMATDIAFAIGILVLLAWRIPRNLIIFLTALAIADDLGAVLVIAIFYTPALHIKALMIAALLLLALLLFNRSGVRHTLPYLLVGLPFWYFVILSGIHATVAGIFLAFTIPARGRILPDELADNLSAHGQHLRDTITHSKRLNPLVNGQLAGIIQDIRNLSVAALAPQQRLEHAIQPWVTFAVLPVFALANAGINFAHISVNMLFSSVTIGTCLGLVLGKFLGIGLSSWLAVRLKIARLPAGVRWRHLLGAAWLGGIGFTMSLFIGQLAFGDPRLREEAKLGILLASLIAASIGLLWLFQVSRKKGDVPA.

A run of 11 helical transmembrane segments spans residues Ala14–Trp34, Leu59–Leu79, Ala95–Phe115, Trp125–Trp145, Ile152–Ile172, Pro176–Phe196, Phe214–Phe234, Ala300–Ile320, Ile336–Leu356, Leu374–Leu394, and Leu407–Val427.

Belongs to the NhaA Na(+)/H(+) (TC 2.A.33) antiporter family.

The protein resides in the cell inner membrane. The enzyme catalyses Na(+)(in) + 2 H(+)(out) = Na(+)(out) + 2 H(+)(in). Functionally, na(+)/H(+) antiporter that extrudes sodium in exchange for external protons. This Acidithiobacillus ferrooxidans (strain ATCC 23270 / DSM 14882 / CIP 104768 / NCIMB 8455) (Ferrobacillus ferrooxidans (strain ATCC 23270)) protein is Na(+)/H(+) antiporter NhaA.